Consider the following 217-residue polypeptide: Octanoyltransferase (217 aa).

The BPL/LPL catalytic domain maps to 32–207 (SDSPDELWIV…TLSQLLGYQQ (176 aa)). Substrate-binding positions include 71-78 (RGGQVTYH), 138-140 (SLG), and 151-153 (GLA). Residue Cys-169 is the Acyl-thioester intermediate of the active site.

This sequence belongs to the LipB family.

It localises to the cytoplasm. The enzyme catalyses octanoyl-[ACP] + L-lysyl-[protein] = N(6)-octanoyl-L-lysyl-[protein] + holo-[ACP] + H(+). It functions in the pathway protein modification; protein lipoylation via endogenous pathway; protein N(6)-(lipoyl)lysine from octanoyl-[acyl-carrier-protein]: step 1/2. Its function is as follows. Catalyzes the transfer of endogenously produced octanoic acid from octanoyl-acyl-carrier-protein onto the lipoyl domains of lipoate-dependent enzymes. Lipoyl-ACP can also act as a substrate although octanoyl-ACP is likely to be the physiological substrate. This chain is Octanoyltransferase, found in Shewanella sp. (strain MR-7).